The following is a 162-amino-acid chain: Proepiregulin (162 aa).

Positions 1–22 are cleaved as a signal peptide; the sequence is METLPASWVLTLLCLGSHLLQA. The propeptide occupies 23–55; that stretch reads VISTTVIPSCIPGESEDNCTALVQMEDDPRVAQ. Asparagine 40 carries N-linked (GlcNAc...) asparagine glycosylation. Residues 53–112 are Extracellular-facing; sequence VAQVQITKCSSDMDGYCLHGQCIYLVDMREKFCRCEVGYTGLRCEHFFLTVHQPLSKEYV. In terms of domain architecture, EGF-like spans 57–97; it reads QITKCSSDMDGYCLHGQCIYLVDMREKFCRCEVGYTGLRCE. 3 disulfides stabilise this stretch: cysteine 61–cysteine 74, cysteine 69–cysteine 85, and cysteine 87–cysteine 96. Positions 102-162 are cleaved as a propeptide — removed in mature form; it reads TVHQPLSKEY…TSGDPVLPQV (61 aa). The chain crosses the membrane as a helical span at residues 113–133; the sequence is ALTVILIFLFLIITAGCIYYF. Residues 134–162 are Cytoplasmic-facing; sequence CRWYKNRKSKKSREEYERVTSGDPVLPQV.

In terms of assembly, interacts with EGFR and ERBB4.

It is found in the secreted. Its subcellular location is the extracellular space. It localises to the cell membrane. In terms of biological role, ligand of the EGF receptor/EGFR and ERBB4. Stimulates EGFR and ERBB4 tyrosine phosphorylation. Contributes to inflammation, wound healing, tissue repair, and oocyte maturation by regulating angiogenesis and vascular remodeling and by stimulating cell proliferation. In Mus musculus (Mouse), this protein is Proepiregulin (Ereg).